We begin with the raw amino-acid sequence, 133 residues long: Complexin-1 (133 aa).

Disordered regions lie at residues 1–40 (MDFVMKQALGGATKDMGKMLGGDEEKDPDAEKKEEERLEA) and 85–112 (AMEAQAEGSLTRPKKAIPAGCGDEDEEE). The segment covering 15–40 (DMGKMLGGDEEKDPDAEKKEEERLEA) has biased composition (basic and acidic residues). Residues 28-60 (PDAEKKEEERLEALRQAEEERAGKYAKMEAERE) are a coiled coil.

It belongs to the complexin/synaphin family. Binds to the SNARE core complex containing SNAP25, VAMP2 and syntaxin-1. In terms of tissue distribution, nervous system. Present in electric organ (at protein level).

It is found in the cytoplasm. It localises to the cytosol. Its function is as follows. Positively regulates a late step in synaptic vesicle exocytosis. This chain is Complexin-1, found in Narke japonica (Japanese sleeper ray).